Reading from the N-terminus, the 108-residue chain is Movement protein (108 aa).

Residues 1–25 (MDASSQYSALPYPQPPRVPSAAPSA) form a disordered region. A helical membrane pass occupies residues 35–55 (EIVIFTFVSVLALYLLWLWVL). The disordered stretch occupies residues 73–108 (LIFGPGERPPVASADGSRPVPDPSPPVRRDLDLSRV). A compositionally biased stretch (basic and acidic residues) spans 99 to 108 (VRRDLDLSRV).

Belongs to the mastrevirus movement protein family. As to quaternary structure, interacts with the capsid protein (CP). Part of a MP-CP-viral DNA complex.

It localises to the host membrane. Its function is as follows. Involved in the viral transport within, and between cells. This is Movement protein from Megathyrsus maximus (PanSV).